The primary structure comprises 427 residues: ATP-dependent RNA helicase DDX39A (427 aa).

Residues 1–19 are compositionally biased toward acidic residues; that stretch reads MAEQDVENELLDYDEDEEP. The segment at 1-35 is disordered; the sequence is MAEQDVENELLDYDEDEEPQVPQESTPAPPKKDVK. The residue at position 2 (A2) is an N-acetylalanine. K31 participates in a covalent cross-link: Glycyl lysine isopeptide (Lys-Gly) (interchain with G-Cter in SUMO2). K35 is modified (N6-acetyllysine; alternate). K35 is covalently cross-linked (Glycyl lysine isopeptide (Lys-Gly) (interchain with G-Cter in SUMO2); alternate). S37 bears the Phosphoserine mark. The short motif at 44 to 72 is the Q motif element; the sequence is SGFRDFLLKPELLRAIVDCGFEHPSEVQH. The 174-residue stretch at 75 to 248 folds into the Helicase ATP-binding domain; the sequence is IPQAILGMDV…RKFMQDPMEV (174 aa). 88–95 serves as a coordination point for ATP; that stretch reads AKSGMGKT. Residues K154 and K162 each participate in a glycyl lysine isopeptide (Lys-Gly) (interchain with G-Cter in SUMO2) cross-link. Phosphothreonine is present on T171. A DECD box motif is present at residues 195 to 198; that stretch reads DECD. Residues K240 and K255 each participate in a glycyl lysine isopeptide (Lys-Gly) (interchain with G-Cter in SUMO2) cross-link. The Helicase C-terminal domain maps to 260–421; sequence GLQQYYVKLK…ELPEEIDIST (162 aa). The residue at position 426 (S426) is a Phosphoserine.

Belongs to the DEAD box helicase family. DECD subfamily. In terms of assembly, binds ALYREF/THOC4 and DDX39B/BAT1. Interacts with the apo-AREX complex component SARNP. Interacts with MX1. Interacts with MCM3AP isoform GANP. Interacts with ECD. Interacts with PHAX; this interaction stimulates PHAX RNA binding activity. Post-translationally, SUMOylated by RANBP2; SUMOylation modification affects its ability to bind RNA.

Its subcellular location is the nucleus. The protein resides in the cytoplasm. It catalyses the reaction ATP + H2O = ADP + phosphate + H(+). Functionally, helicase that plays an essential role in mRNA export and is involved in multiple steps in RNA metabolism including alternative splicing. Regulates nuclear mRNA export to the cytoplasm through association with ECD. Also involved in spliceosomal uridine-rich small nuclear RNA (U snRNA) export by stimulating the RNA binding of adapter PHAX. Plays a role in the negative regulation of type I IFN production by increasing the nuclear retention of antiviral transcripts and thus reducing their protein expression. Independently of the interferon pathway, plays an antiviral role against alphaviruses by binding to a 5' conserved sequence element in the viral genomic RNA. In Rattus norvegicus (Rat), this protein is ATP-dependent RNA helicase DDX39A (Ddx39a).